The chain runs to 189 residues: UPF0301 protein RrIowa_0061 (189 aa).

It belongs to the UPF0301 (AlgH) family.

The sequence is that of UPF0301 protein RrIowa_0061 from Rickettsia rickettsii (strain Iowa).